A 360-amino-acid polypeptide reads, in one-letter code: Methionine import ATP-binding protein MetN (360 aa).

Residues 1 to 22 (MSHTASTPTPEEYSAQQPSTQG) are disordered. The 241-residue stretch at 25–265 (VEFRGITKVF…PQTQVAQKFV (241 aa)) folds into the ABC transporter domain. 62–69 (GYSGAGKS) is an ATP binding site.

The protein belongs to the ABC transporter superfamily. Methionine importer (TC 3.A.1.24) family. As to quaternary structure, the complex is composed of two ATP-binding proteins (MetN), two transmembrane proteins (MetI) and a solute-binding protein (MetQ).

The protein localises to the cell membrane. It catalyses the reaction L-methionine(out) + ATP + H2O = L-methionine(in) + ADP + phosphate + H(+). The enzyme catalyses D-methionine(out) + ATP + H2O = D-methionine(in) + ADP + phosphate + H(+). Its function is as follows. Part of the ABC transporter complex MetNIQ involved in methionine import. Responsible for energy coupling to the transport system. The polypeptide is Methionine import ATP-binding protein MetN (Corynebacterium glutamicum (strain ATCC 13032 / DSM 20300 / JCM 1318 / BCRC 11384 / CCUG 27702 / LMG 3730 / NBRC 12168 / NCIMB 10025 / NRRL B-2784 / 534)).